The primary structure comprises 4377 residues: MKVDRTKLKKTPTEAPADCRALIDKLKVCNDEQLLLELQQIKTWNIGKCELYHWVDLLDRFDGILADAGQTVENMSWMLVCDRPEKEQLKMLLLAVLNFTALLIEYSFSRHLYSSIEHLTTLLASSDMQVVLAVLNLLYVFSKRSNYITRLGSDKRTPLLTRLQHLAESWGGKENGFGLAECCRDLQMLKYPPSATTLHFEFYADPGAEVKIEKRTTSNTLHYIHIEQLDKISESPSEIMESLTKMYSIPKDKQMLLFTHIRLAHGFSNHRKRLQAVQARLHAISILVYSNALQESANSILYNGLIEELVDVLQITDKQLMEIKAASLRTLTSIVHLERTPKLSSIIDCTGTASYHGFLPVLVRNCIQAMIDPSMDPYPHQFATALFSFLYHLASYDAGGEALVSCGMMEALLKVIKFLGDEQDQITFVTRAVRVVDLITNLDMAAFQSHSGLSIFIYRLEHEVDLCRKECPFVIKPKIQRPSTTQEGEEMETDMDGVQCIPQRAALLKSMLNFLKKAIQDPAFSDGIRHVMDGSLPTSLKHIISNAEYYGPSLFLLATEVVTVFVFQEPSLLSSLQDNGLTDVMLHALLIKDVPATREVLGSLPNVFSALCLNARGLQSFVQCQPFERLFKVLLSPDYLPAMRRRRSSDPLGDTASNLGSAVDELMRHQPTLKTDATTAIIKLLEEICNLGRDPKYICQKPSIQKADGTATAPPPRSNHAAEEASSEDEEEEEVQAMQSFNSAQQNETEPNQQVVGTEERIPIPLMDYILNVMKFVESILSNNTTDDHCQEFVNQKGLLPLVTILGLPNLPIDFPTSAACQAVAGVCKSILTLSHEPKVLQEGLLQLDLILSSLEPLHRPIESPGGSVLLRELACAGNVADATLSAQATPLLHALTAAHAYIMMFVHTCRVGQSEIRSISVNQWGSQLGLSVLSKLSQLYCSLVWESTVLLSLCTPNSLPSGCEFGQADMQKLVPKDEKAGTTQGGKRSDGEQDGTAGSMDASAQGLLEGIELDGDTLAPMETDEPSSSDSKGKSKITPAMAARIKQIKPLLSASSRLGRALAELFGLLVKLCVGSPVRQRRSHHAASTTTAPTPAARSTASALTKLLTKGLSWQPPPYTPTPRFRLTFFICSVGFTSPMLFDERKYPYHLMLQKFLCSGGHNALFETFNWALSMGGKVPVSEGLEHSDLPDGTGEFLDAWLMLVEKMVNPTTVLESPHSLPAKLPGGVQSFPQFSALRFLVVTQKAAFTCIKNLWNRKPLKVYGGRMAESMLAILCHILRGEPVIRERLSKEKEGSRGEEEAGQEEGGSRREPQVNQQQLQQLMDMGFTREHAMEALLNTSTMEQATEYLLTHPPPIIGGVVRDLSMSEEDQMMRAIAMSLGQDIPMDQRAESPEEVACRKEEEERKAREKQEEEEAKCLEKFQDADPLEQDELHTFTDTMLPGCFHLLDELPDTVYRVCDLIMTAIKRNGADYRDMILKQVVNQVWEAADVLIKAALPLTTSDTKTVSEWISQMATLPQASNLATRILLLTLLFEELKLPCAWVVESSGILNVLIKLLEVVQPCLQAAKEQKEVQTPKWITPVLLLIDFYEKTAISSKRRAQMTKYLQSNSNNWRWFDDRSGRWCSYSASNNSTIDSAWKSGETSVRFTAGRRRYTVQFTTMVQVNEETGNRRPVMLTLLRVPRLSKNSKSSNGQELEKTLEESKETDIKHKENKGNDIPLALESTNTEKEASLDETKIGEILIQGLTEDMVTVLIRACVSMLGVPVDPDTLHATLRLCLRLTRDHKYAMMFAELKSTRMILNLTQSSGFNGFTPLVTLLLRHIIEDPCTLRHTMEKVVRSAATSGAGSTTSGVVSGSLGSREINYILRVLGPAACRNPDIFTEVANCCIRIALPAPRGSGTASDDEFENLRIKGPNAVQLVKTTPLKPSSLPVIPDTIKEVIYDMLNALAAYHAPEEADKSDPKPGGTTQEVGQLLQDMGDDVYQQYRSLTRQSSDFDTQSGFSLNSQVFAADGAPAETSTTGTSQGEASTPEETREGKKDKEGDRTSEEGKQKSKGSKPLMPTSTILRLLAELVRSYVGIATLIANYSYTVGQSELIKEDCSVLAFVLDHLLPHTQNAEDKDTPALARLFLASLAAAGSGTDAQVALVNEVKAALGRALAMAESTEKHARLQAVMCIISTIMESCPSTSSFYSSATAKTQHNGMNNIIRLFLKKGLVNDLARVPHSLDLSSPNMANTVNAALKPLETLSRIVNQPSSLFGSKSASSKNKSEQDAQGASQDSSSHQQDPGEPGEAEVQEEDHDVTQTEVADGDIMDGEAETDSVVIAGQPEVLSSQEMQVENELEDLIDELLERDGGSGNSTIIVSRSGEDESQEDVLMDEAPSNLSQASTLQANREDSMNILDPEDEEEHTQEEDSSGSNEDEDDSQDEEEEEEEDEEDDQEDDEGEEGDEDDDDDGSEMELDEDYPDMNASPLVRFERFDREDDLIIEFDNMFSSATDIPPSPGNIPTTHPLMVRHADHSSLTLGSGSSTTRLTQGIGRSQRTLRQLTANTGHTIHVHYPGNRQPNPPLILQRLLGPSAAADILQLSSSLPLQSRGRARLLVGNDDVHIIARSDDELLDDFFHDQSTATSQAGTLSSIPTALTRWTEECKVLDAESMHDCVSVVKVPIVNHLEFLRDEELEERREKRRKQLAEEETKIIDKGKEDKENRDQSAQCTVTKTNDSTEQNVSDGTPMPDSYPTTPSSTDAPTSESKETLGTLQPSQQQPALPPPPSLGEIPQELQSPAEEVANSTQLLMPIELEELGPTRPSGEAETTQMELSPAPTITSLSPERAEDSDALTAVSSQLEGSPMDTSSLASCTLEEAVGDTPAAGSSEQPTAGSSTPGDAPSVVAEVQGRPDVSRESNQPPEDSSPPASSESSSTRDSAVAISGADSRGILEEPLPSTSSEEEDPLAGISLPEGVDPSFLAALPDDIRREVLQNQLGIRPPTRSAPSSNSSAPAVVGNPGVTEVSPEFLAALPPAIQEEVLAQQRAEQQRRELAQNASSDTPMDPVTFIQTLPSDLRRSVLEDMEDSVLAVMPPDIAAEAQALRREQEARQRQLMHERLFGHSSTSALSAILRSPAFTSRLSGNRGVQYTRLAVQRGGTFQMGGSSSHNRPSGSNVDTLLRLRGRLLLDHEALSCLLVLLFVDEPKLNTSRLHRVLRNLCYHAQTRHWVIRSLLSILQRSSESELCIETPKLSTSEERGKKSSKSCASSSHENRPLDLLHKMESKSSNQLSWLSVSMDAALGCRTNIFQIQRSGGRKHTEKHASSGSTVHIHPQAAPVVCRHVLDTLIQLAKVFPSHFTQQRTKETNCESDRERGSKQACSPCSSQSSSSGICTDFWDLLVKLDNMNVSRKGKNSVKSVPVSSGGEGETSPHSLEASPLGQLMNMLSHPVIRRSSLLTEKLLRLLSLISIALPENKVSEVQTNSSNSGSSTAATSNTSTTTTTTTTATAPTPTPPAATTPVTSAPALVAATAISTITVAASTTVTTPTTATTTVSTSTTKGSKSPAKVGEGGSGIDFKMVSSGLTENQLQLSVEVLTSHSCSEEGLEDAANVLLQLSRGDSGTRDTVLKLLLNGARHLGYTLCKQIGTLLAELREYNLEQQRRAQCETLSPDGLPEEQPQTTKLKGKMQSRFDMAENVVIVASQKRPLGGRELQLPSMSMLTSKTSTQKFFLRVLQVIIQLRDDTRRANKKAKQTGRLGSSGLGSASSIQAAVRQLEAEADAIIQMVREGQRARRQQQAATSESSNQSETSVRREESPMDVDQPSPSAQDTQSIVISDGTPQGEKEKEEKPPELPLLSEQLSLDELWDMLGECLKELEESHDQHAVLVLQPAVEAFFLVHATERESKPPVRDTRESQLAHIKDEPPPLSPAPLTPATPSSLDPFFSREPSSMHISSSLPPDTQKFLRFAETHRTVLNQILRQSTTHLADGPFAVLVDYIRVLDFDVKRKYFRQELERLDEGLRKEDMAVHVRRDHVFEDSYRELHRKSPEEMKNRLYIVFEGEEGQDAGGLLREWYMIISREMFNPMYALFRTSPGDRVTYTINPSSHCNPNHLSYFKFVGRIVAKAVYDNRLLECYFTRSFYKHILGKSVRYTDMESEDYHFYQGLVYLLENDVSTLGYDLTFSTEVQEFGVCEVRDLKPNGANILVTEENKKEYVHLVCQMRMTGAIRKQLAAFLEGFYEIIPKRLISIFTEQELELLISGLPTIDIDDLKSNTEYHKYQSNSIQIQWFWRALRSFDQADRAKFLQFVTGTSKVPLQGFAALEGMNGIQKFQIHRDDRSTDRLPSAHTCFNQLDLPAYESFEKLRHMLLLAIQECSEGFGLA.

2 positions are modified to phosphoserine: S648 and S649. Disordered regions lie at residues 706–758 (KADG…VVGT), 978–1001 (DEKA…AGSM), and 1018–1038 (TLAP…KSKI). The segment covering 725–735 (ASSEDEEEEEV) has biased composition (acidic residues). Positions 737–756 (AMQSFNSAQQNETEPNQQVV) are enriched in polar residues. S740 is modified (phosphoserine). The residue at position 1084 (S1084) is a Phosphoserine. Residues 1291 to 1302 (LSKEKEGSRGEE) show a composition bias toward basic and acidic residues. The segment at 1291–1320 (LSKEKEGSRGEEEAGQEEGGSRREPQVNQQ) is disordered. The region spanning 1316-1355 (QVNQQQLQQLMDMGFTREHAMEALLNTSTMEQATEYLLTH) is the UBA domain. A phosphoserine mark is found at S1368, S1370, S1382, and S1395. Positions 1370–1389 (SEEDQMMRAIAMSLGQDIPM) constitute a UIM domain. Residues 1396 to 1415 (PEEVACRKEEEERKAREKQE) form a disordered region. The 78-residue stretch at 1603–1680 (RAQMTKYLQS…ETGNRRPVML (78 aa)) folds into the WWE domain. Positions 1690–1733 (KNSKSSNGQELEKTLEESKETDIKHKENKGNDIPLALESTNTEK) are disordered. A compositionally biased stretch (basic and acidic residues) spans 1699 to 1719 (ELEKTLEESKETDIKHKENKG). Phosphoserine is present on S1907. 3 disordered regions span residues 2019–2065 (APAE…SKPL), 2262–2343 (SLFG…QEMQ), and 2355–2479 (LLER…ASPL). The segment covering 2022–2033 (ETSTTGTSQGEA) has biased composition (polar residues). The residue at position 2035 (T2035) is a Phosphothreonine. Over residues 2037 to 2057 (EETREGKKDKEGDRTSEEGKQ) the composition is skewed to basic and acidic residues. Low complexity-rich tracts occupy residues 2262 to 2271 (SLFGSKSASS) and 2278 to 2291 (DAQG…SHQQ). S2266 carries the phosphoserine modification. The residue at position 2267 (K2267) is an N6-acetyllysine. 2 stretches are compositionally biased toward acidic residues: residues 2295 to 2306 (EPGEAEVQEEDH) and 2314 to 2325 (ADGDIMDGEAET). A phosphoserine mark is found at S2362, S2365, and S2391. Polar residues predominate over residues 2388–2398 (SNLSQASTLQA). A compositionally biased stretch (acidic residues) spans 2408 to 2472 (DPEDEEEHTQ…SEMELDEDYP (65 aa)). 3 positions are modified to phosphoserine: S2527, S2532, and S2535. T2554 bears the Phosphothreonine mark. S2584, S2595, and S2619 each carry phosphoserine. A compositionally biased stretch (basic and acidic residues) spans 2704-2716 (IIDKGKEDKENRD). 3 disordered regions span residues 2704–2970 (IIDK…GVDP), 2991–3012 (IRPP…VGNP), and 3036–3059 (QQRA…MDPV). Polar residues predominate over residues 2717–2736 (QSAQCTVTKTNDSTEQNVSD). Low complexity predominate over residues 2738–2756 (TPMPDSYPTTPSSTDAPTS). The residue at position 2751 (T2751) is a Phosphothreonine. 3 stretches are compositionally biased toward polar residues: residues 2818-2835 (AETT…TSLS), 2847-2864 (AVSS…SLAS), and 2877-2890 (AGSS…SSTP). 6 positions are modified to phosphoserine: S2826, S2833, S2835, S2861, S2887, and S2888. Phosphothreonine is present on T2889. 2 stretches are compositionally biased toward low complexity: residues 2913–2932 (PPED…RDSA) and 2993–3007 (PPTR…SAPA). Phosphoserine is present on S2918. Phosphoserine occurs at positions 3116, 3117, 3122, 3127, and 3135. Omega-N-methylarginine is present on R3149. Disordered regions lie at residues 3243–3266 (PKLS…SHEN), 3352–3383 (TQQR…SSSS), 3405–3429 (GKNS…SLEA), 3471–3514 (SEVQ…TTPV), and 3539–3566 (TPTT…EGGS). The span at 3355 to 3369 (RTKETNCESDRERGS) shows a compositional bias: basic and acidic residues. A compositionally biased stretch (low complexity) spans 3370–3383 (KQACSPCSSQSSSS). Composition is skewed to low complexity over residues 3475–3503 (TNSS…ATAP) and 3539–3552 (TPTT…TSTT). 6 positions are modified to phosphoserine: S3557, S3663, S3753, S3758, S3760, and S3761. Residues 3738-3759 (TRRANKKAKQTGRLGSSGLGSA) form a disordered region. Over residues 3749–3759 (GRLGSSGLGSA) the composition is skewed to low complexity. Disordered stretches follow at residues 3782-3850 (EGQR…LPLL) and 3897-3951 (RESK…SSSL). Polar residues predominate over residues 3794-3803 (TSESSNQSET). 3 positions are modified to phosphoserine: S3810, S3818, and S3830. Over residues 3817–3828 (PSPSAQDTQSIV) the composition is skewed to polar residues. T3833 carries the post-translational modification Phosphothreonine. Basic and acidic residues-rich tracts occupy residues 3836-3845 (GEKEKEEKPP) and 3897-3918 (RESK…KDEP). Phosphoserine occurs at positions 3909 and 3922. Positions 3919-3928 (PPLSPAPLTP) are enriched in pro residues. Phosphothreonine is present on residues T3927 and T3930. Polar residues predominate over residues 3941 to 3951 (EPSSMHISSSL). In terms of domain architecture, HECT spans 4041 to 4377 (SPEEMKNRLY…QECSEGFGLA (337 aa)). Y4274 carries the post-translational modification Phosphotyrosine. C4344 (glycyl thioester intermediate) is an active-site residue.

It belongs to the UPL family. TOM1/PTR1 subfamily. As to quaternary structure, interacts with isoform p19ARF of CDKN2A which strongly inhibits HUWE1 ubiquitin ligase activity. Interacts with MYCN, POLB and CDC6. Interacts with PA2G4. Interacts with NR1D1. Interacts with AMBRA1. Interacts with HAPSTR1. Interacts with HAPSTR2. In hepatocytes, interacts with PAQR3; the interaction promotes PPARA poylubiquitination and STUB1-mediated degradation. Phosphorylated on tyrosine; phosphorylation is probably required for its ability to inhibit TP53 transactivation. As to expression, widely expressed.

It localises to the cytoplasm. The protein localises to the nucleus. The protein resides in the mitochondrion. It carries out the reaction S-ubiquitinyl-[E2 ubiquitin-conjugating enzyme]-L-cysteine + [acceptor protein]-L-lysine = [E2 ubiquitin-conjugating enzyme]-L-cysteine + N(6)-ubiquitinyl-[acceptor protein]-L-lysine.. It participates in protein modification; protein ubiquitination. E3 ubiquitin-protein ligase which mediates ubiquitination and subsequent proteasomal degradation of target proteins. Regulates apoptosis by catalyzing the polyubiquitination and degradation of MCL1. Mediates monoubiquitination of DNA polymerase beta (POLB) at 'Lys-41', 'Lys-61' and 'Lys-81', thereby playing a role in base-excision repair. Also ubiquitinates the p53/TP53 tumor suppressor and core histones including H1, H2A, H2B, H3 and H4. Ubiquitinates MFN2 to negatively regulate mitochondrial fusion in response to decreased stearoylation of TFRC. Ubiquitination of MFN2 also takes place following induction of mitophagy; AMBRA1 acts as a cofactor for HUWE1-mediated ubiquitination. Regulates neural differentiation and proliferation by catalyzing the polyubiquitination and degradation of MYCN. May regulate abundance of CDC6 after DNA damage by polyubiquitinating and targeting CDC6 to degradation. Mediates polyubiquitination of PA2G4. Acts in concert with MYCBP2 to regulate the circadian clock gene expression by promoting the lithium-induced ubiquination and degradation of NR1D1. Binds to an upstream initiator-like sequence in the preprodynorphin gene. Mediates HAPSTR1 degradation, but is also a required cofactor in the pathway by which HAPSTR1 governs stress signaling. Acts as a regulator of the JNK and NF-kappa-B signaling pathways by mediating assembly of heterotypic 'Lys-63'-/'Lys-48'-linked branched ubiquitin chains that are then recognized by TAB2: HUWE1 mediates branching of 'Lys-48'-linked chains of substrates initially modified with 'Lys-63'-linked conjugates by TRAF6. 'Lys-63'-/'Lys-48'-linked branched ubiquitin chains protect 'Lys-63'-linkages from CYLD deubiquitination. Ubiquitinates PPARA in hepatocytes. The polypeptide is E3 ubiquitin-protein ligase HUWE1 (Huwe1) (Mus musculus (Mouse)).